The chain runs to 566 residues: MARQPYRFPQARIPERGSGVFRLTVRNAMAHRDSEMKEECLREDLKFYFMSPCEKYRARRQIPWKLGLQILKIVMVTTQLVRFGLSNQLVVAFKEDNTVAFKHLFLKGYSGTDEDDYSCSVYTQEDAYESIFFAINQYHQLKDITLGTLGYGENEDNRIGLKVCKQHYKKGTMFPSNETLNIDNDVELDCVQLDLQDLSKKPPDWKNSSFFRLEFYRLLQVEISFHLKGIDLQTIHSRELPDCYVFQNTIIFDNKAHSGKIKIYFDSDAKIEECKDLNIFGSTQKNAQYVLVFDAFVIVICLASLILCTRSIVLALRLRKRFLNFFLEKYKRPVCDTDQWEFINGWYVLVIISDLMTIIGSILKMEIKAKNLTNYDLCSIFLGTSTLLVWVGVIRYLGYFQAYNVLILTMQASLPKVLRFCACAGMIYLGYTFCGWIVLGPYHDKFENLNTVAECLFSLVNGDDMFATFAQIQQKSILVWLFSRLYLYSFISLFIYMILSLFIALITDSYDTIKKFQQNGFPETDLQEFLKECSSKEEYQKESSAFLSCICCRRRKRSDDHLIPIS.

Residues 1–65 are Cytoplasmic-facing; the sequence is MARQPYRFPQ…YRARRQIPWK (65 aa). The chain crosses the membrane as a helical span at residues 66 to 86; that stretch reads LGLQILKIVMVTTQLVRFGLS. The Extracellular portion of the chain corresponds to 87 to 288; that stretch reads NQLVVAFKED…IFGSTQKNAQ (202 aa). Residues 107 to 123 form an extracellular/lumenal pore loop region; that stretch reads KGYSGTDEDDYSCSVYT. Intrachain disulfides connect cysteine 164/cysteine 190 and cysteine 243/cysteine 274. Residues 289–309 form a helical membrane-spanning segment; sequence YVLVFDAFVIVICLASLILCT. The Cytoplasmic segment spans residues 310 to 346; sequence RSIVLALRLRKRFLNFFLEKYKRPVCDTDQWEFINGW. A helical membrane pass occupies residues 347 to 367; the sequence is YVLVIISDLMTIIGSILKMEI. Residues 368-376 lie on the Extracellular side of the membrane; it reads KAKNLTNYD. A helical membrane pass occupies residues 377–397; sequence LCSIFLGTSTLLVWVGVIRYL. Over 398–419 the chain is Cytoplasmic; the sequence is GYFQAYNVLILTMQASLPKVLR. A helical transmembrane segment spans residues 420 to 440; it reads FCACAGMIYLGYTFCGWIVLG. The Extracellular portion of the chain corresponds to 441 to 448; the sequence is PYHDKFEN. The pore-forming intramembrane region spans 449-469; the sequence is LNTVAECLFSLVNGDDMFATF. The short motif at 461–464 is the Selectivity filter element; sequence NGDD. The Extracellular segment spans residues 470-480; it reads AQIQQKSILVW. The helical transmembrane segment at 481–502 threads the bilayer; it reads LFSRLYLYSFISLFIYMILSLF. Residues 503-566 are Cytoplasmic-facing; sequence IALITDSYDT…RSDDHLIPIS (64 aa).

The protein belongs to the transient receptor (TC 1.A.4) family. Polycystin subfamily. MCOLN2 sub-subfamily. In terms of assembly, forms homooligomeric complexes; probably tetrameric. Can heterooligomerize with MCOLN1; heteromeric assemblies have different channel properties as compared to the respective homooligomers and may be tissue-specific. Interacts with TMEM176A.

Its subcellular location is the cell membrane. The protein localises to the late endosome membrane. It localises to the lysosome membrane. The protein resides in the recycling endosome membrane. It carries out the reaction Ca(2+)(in) = Ca(2+)(out). The catalysed reaction is Fe(2+)(in) = Fe(2+)(out). With respect to regulation, channel activity is reduced by low extracellular/lumenal pH level. Nonselective cation channel probably playing a role in the regulation of membrane trafficking events. Acts as a Ca(2+)-permeable cation channel with inwardly rectifying activity. May activate ARF6 and be involved in the trafficking of GPI-anchored cargo proteins to the cell surface via the ARF6-regulated recycling pathway. May play a role in immune processes. In adaptive immunity, TRPML2 and TRPML1 may play redundant roles in the function of the specialized lysosomes of B cells. In the innate immune response, may play a role in the regulation of chemokine secretion and macrophage migration. Through a possible and probably tissue-specific heteromerization with MCOLN1 may be at least in part involved in many lysosome-dependent cellular events. Also functions as a Fe(2+) permeable channel. The polypeptide is Mucolipin-2 (Homo sapiens (Human)).